The sequence spans 390 residues: S-adenosylmethionine synthase 2 (390 aa).

Glu9 provides a ligand contact to Mg(2+). Position 15 (His15) interacts with ATP. Glu43 provides a ligand contact to K(+). 2 residues coordinate L-methionine: Glu56 and Gln99. ATP contacts are provided by residues 167–169, 235–238, Asp246, 252–253, Ala269, Lys273, and Lys277; these read DGK, SGRF, and RK. Asp246 lines the L-methionine pocket. Lys277 provides a ligand contact to L-methionine.

The protein belongs to the AdoMet synthase family. As to quaternary structure, homotetramer. Mn(2+) serves as cofactor. Mg(2+) is required as a cofactor. The cofactor is Co(2+). Requires K(+) as cofactor.

The protein resides in the cytoplasm. The catalysed reaction is L-methionine + ATP + H2O = S-adenosyl-L-methionine + phosphate + diphosphate. It participates in amino-acid biosynthesis; S-adenosyl-L-methionine biosynthesis; S-adenosyl-L-methionine from L-methionine: step 1/1. Its function is as follows. Catalyzes the formation of S-adenosylmethionine from methionine and ATP. The reaction comprises two steps that are both catalyzed by the same enzyme: formation of S-adenosylmethionine (AdoMet) and triphosphate, and subsequent hydrolysis of the triphosphate. This is S-adenosylmethionine synthase 2 (SAMS2) from Nicotiana tabacum (Common tobacco).